Consider the following 133-residue polypeptide: Phosphoribosyl-ATP pyrophosphatase (133 aa).

The disordered stretch occupies residues 1 to 22 (MGKPATKPAPKPSKQQDDKKSD).

The protein belongs to the PRA-PH family.

The protein resides in the cytoplasm. It carries out the reaction 1-(5-phospho-beta-D-ribosyl)-ATP + H2O = 1-(5-phospho-beta-D-ribosyl)-5'-AMP + diphosphate + H(+). It functions in the pathway amino-acid biosynthesis; L-histidine biosynthesis; L-histidine from 5-phospho-alpha-D-ribose 1-diphosphate: step 2/9. The polypeptide is Phosphoribosyl-ATP pyrophosphatase (Gluconobacter oxydans (strain 621H) (Gluconobacter suboxydans)).